The following is a 352-amino-acid chain: 4-hydroxy-2-oxovalerate aldolase (352 aa).

In terms of domain architecture, Pyruvate carboxyltransferase spans 13–265 (VRLTDTSLRD…KTGIDFFDIA (253 aa)). 21-22 (RD) is a binding site for substrate. Aspartate 22 is a binding site for Mn(2+). Histidine 25 acts as the Proton acceptor in catalysis. The substrate site is built by serine 175 and histidine 204. Mn(2+) is bound by residues histidine 204 and histidine 206. Tyrosine 295 is a binding site for substrate.

It belongs to the 4-hydroxy-2-oxovalerate aldolase family.

It catalyses the reaction (S)-4-hydroxy-2-oxopentanoate = acetaldehyde + pyruvate. This Mycolicibacterium paratuberculosis (strain ATCC BAA-968 / K-10) (Mycobacterium paratuberculosis) protein is 4-hydroxy-2-oxovalerate aldolase.